Here is a 482-residue protein sequence, read N- to C-terminus: G2/mitotic-specific cyclin cdc13 (482 aa).

3 stretches are compositionally biased toward polar residues: residues 35–55 (LHSS…STNV), 78–92 (SKNT…SVST), and 118–140 (SVFN…SVST). Residues 35–140 (LHSSENSLVN…LSTKSHSVST (106 aa)) form a disordered region. Residues 206 to 332 (DIFEYLNELE…ILRVLEFNLA (127 aa)) enclose the Cyclin N-terminal domain.

Belongs to the cyclin family. Cyclin AB subfamily. As to quaternary structure, interacts with cdc2. Interacts with rum1. Associates with microtubules. Also interacts with cdc11.

It is found in the nucleus. The protein localises to the cytoplasm. It localises to the cytoskeleton. Its subcellular location is the microtubule organizing center. The protein resides in the spindle pole body. Essential for the control of the cell cycle at the G2/M (mitosis) transition. Interacts with the cdc2 protein kinase to form MPF. G2/M cyclins accumulate steadily during G2 and are abruptly destroyed at mitosis. Involved in the reorganization of the cytoskeleton on transition from G2 to mitosis. Association with rum1 promotes its proteolysis during G1. Also essential for initiation of meiosis II. The protein is G2/mitotic-specific cyclin cdc13 of Schizosaccharomyces pombe (strain 972 / ATCC 24843) (Fission yeast).